Here is a 126-residue protein sequence, read N- to C-terminus: Histone H2B 1.2 (126 aa).

The span at 1 to 12 (MPEPAKSAPAPK) shows a compositional bias: low complexity. The segment at 1–35 (MPEPAKSAPAPKKGSKKAVTKTPKKDGKKRRKSRK) is disordered. 2 positions are modified to N6-acetyllysine: K6 and K13. The residue at position 15 (S15) is a Phosphoserine. N6-acetyllysine occurs at positions 16 and 21. S113 carries an O-linked (GlcNAc) serine glycan. K121 participates in a covalent cross-link: Glycyl lysine isopeptide (Lys-Gly) (interchain with G-Cter in ubiquitin).

The protein belongs to the histone H2B family. The nucleosome is a histone octamer containing two molecules each of H2A, H2B, H3 and H4 assembled in one H3-H4 heterotetramer and two H2A-H2B heterodimers. The octamer wraps approximately 147 bp of DNA. In terms of processing, monoubiquitination of Lys-121 by BRE1 gives a specific tag for epigenetic transcriptional activation and is also prerequisite for histone H3 'Lys-4' and 'Lys-79' methylation. Phosphorylated on Ser-15 during developmentally programmed apoptosis; which may facilitate apoptotic chromatin condensation. Post-translationally, glcNAcylation at Ser-113 promotes monoubiquitination of Lys-121. It fluctuates in response to extracellular glucose, and associates with transcribed genes.

The protein localises to the nucleus. It localises to the chromosome. Core component of nucleosome. Nucleosomes wrap and compact DNA into chromatin, limiting DNA accessibility to the cellular machineries which require DNA as a template. Histones thereby play a central role in transcription regulation, DNA repair, DNA replication and chromosomal stability. DNA accessibility is regulated via a complex set of post-translational modifications of histones, also called histone code, and nucleosome remodeling. In Xenopus laevis (African clawed frog), this protein is Histone H2B 1.2.